Here is a 722-residue protein sequence, read N- to C-terminus: uncharacterized protein (722 aa).

Catalysis depends on charge relay system residues S575, D658, and H691.

This sequence belongs to the peptidase S9B family.

This is an uncharacterized protein from Rickettsia prowazekii (strain Madrid E).